The primary structure comprises 143 residues: Large ribosomal subunit protein uL16 (143 aa).

This sequence belongs to the universal ribosomal protein uL16 family. As to quaternary structure, part of the 50S ribosomal subunit.

In terms of biological role, binds 23S rRNA and is also seen to make contacts with the A and possibly P site tRNAs. The chain is Large ribosomal subunit protein uL16 from Thermosynechococcus vestitus (strain NIES-2133 / IAM M-273 / BP-1).